We begin with the raw amino-acid sequence, 527 residues long: Probable serine/threonine-protein kinase DDB_G0271538 (527 aa).

Positions 1–10 (MNINFSKDDI) are enriched in basic and acidic residues. Positions 1–24 (MNINFSKDDITGLPKSTKEEDEND) are disordered. The Protein kinase domain maps to 33–294 (LFMDVEIGRG…KIVVEGLKVL (262 aa)). Residues 39–47 (IGRGSFGQV) and Lys-60 contribute to the ATP site. Asp-156 acts as the Proton acceptor in catalysis. 3 disordered regions span residues 304-375 (VKGK…ISGS), 422-452 (FTPP…DDVP), and 485-527 (TALD…KKKL). Residues 313 to 324 (DPDEDSFIDPND) are compositionally biased toward acidic residues. A compositionally biased stretch (low complexity) spans 325-359 (DSNNNNNSENNNNNNDNSNENNENNNENNNNSNEN). The span at 440–452 (VDEDEDEDEDDVP) shows a compositional bias: acidic residues. The span at 512–527 (PKKKPNNKNKKKKKKL) shows a compositional bias: basic residues.

It belongs to the protein kinase superfamily. TKL Ser/Thr protein kinase family.

The catalysed reaction is L-seryl-[protein] + ATP = O-phospho-L-seryl-[protein] + ADP + H(+). The enzyme catalyses L-threonyl-[protein] + ATP = O-phospho-L-threonyl-[protein] + ADP + H(+). The polypeptide is Probable serine/threonine-protein kinase DDB_G0271538 (Dictyostelium discoideum (Social amoeba)).